We begin with the raw amino-acid sequence, 318 residues long: GTP cyclohydrolase MptA (318 aa).

Belongs to the GTP cyclohydrolase IV family. In terms of assembly, homodimer. It depends on Fe(2+) as a cofactor.

The catalysed reaction is GTP + H2O = 7,8-dihydroneopterin 2',3'-cyclic phosphate + formate + diphosphate + H(+). It participates in cofactor biosynthesis; 5,6,7,8-tetrahydromethanopterin biosynthesis. Converts GTP to 7,8-dihydro-D-neopterin 2',3'-cyclic phosphate, the first intermediate in the biosynthesis of coenzyme methanopterin. The polypeptide is GTP cyclohydrolase MptA (Methanosarcina mazei (strain ATCC BAA-159 / DSM 3647 / Goe1 / Go1 / JCM 11833 / OCM 88) (Methanosarcina frisia)).